The following is a 1373-amino-acid chain: Ribonuclease 3 (1373 aa).

Disordered regions lie at residues 1–99, 119–406, and 447–496; these read MQGN…PVRP, MPPP…EEEL, and FEEE…SSSS. Positions 47 to 69 are enriched in low complexity; the sequence is PAQYQYEPPSAPSSSYSNSQAPS. Pro residues-rich tracts occupy residues 70 to 99, 119 to 133, and 144 to 159; these read FMPPRPDFVPYPPPAAPSAQGPLPPCPVRP, MPPPMPCPNNPPASG, and MVPPPSMPHPPPPPVM. Low complexity-rich tracts occupy residues 160 to 169 and 185 to 200; these read PQQVNYQYPP and NNSSSFPPSANSSSTP. 3 stretches are compositionally biased toward basic and acidic residues: residues 214 to 271, 278 to 288, and 297 to 312; these read QNER…DRGR, RSYERSRERDR, and RRSPSLERSYKKEYKR. Phosphoserine occurs at positions 354 and 372. Composition is skewed to basic and acidic residues over residues 363-398 and 447-459; these read RWEEEKDRWSDSQGSGKEKNYTSIKEKEAEEVPPEK and FEEELGNRQEKAK. Residues 389-1364 are necessary for interaction with DGCR8 and pri-miRNA processing activity; it reads KEAEEVPPEK…RWEREHQERE (976 aa). A compositionally biased stretch (acidic residues) spans 474-490; sequence EDLESSSESECETDDDS. Residues Cys-535, Cys-537, His-548, Cys-560, His-608, Cys-675, and His-679 each contribute to the Zn(2+) site. RNase III domains follow at residues 875 to 1055 and 1106 to 1232; these read LMHL…LEGS and LTEF…IDKD. Glu-968 is a Mg(2+) binding site. Position 1025 (His-1025) interacts with Zn(2+). 5 residues coordinate Mg(2+): Asn-1041, Glu-1044, Glu-1146, Asp-1218, and Glu-1221. The 75-residue stretch at 1259 to 1333 folds into the DRBM domain; sequence DPKSQLQQCC…AMDALEKYNF (75 aa).

The protein belongs to the ribonuclease III family. As to quaternary structure, component of the microprocessor complex, or pri-miRNA processing protein complex, which is composed of DROSHA and DGCR8. The microprocessor complex is a heterotrimer; each of the two DROSHA RNase III domains binds one DGCR8 (via C-terminal region). Interacts with SP1 and SNIP1. Interacts with SRRT/ARS2. Interacts with CPSF3 and ISY1; this interaction is in an RNA dependent manner. Interacts with PUS10; interaction promotes pri-miRNAs processing. Mg(2+) serves as cofactor. The cofactor is Mn(2+). In terms of processing, degraded by autophagy in response to neuronal activity in motor neurons. As to expression, expressed in motor neurons (at protein level).

Its subcellular location is the nucleus. The protein resides in the nucleolus. The protein localises to the cytoplasm. It catalyses the reaction Endonucleolytic cleavage to 5'-phosphomonoester.. In terms of biological role, ribonuclease III double-stranded (ds) RNA-specific endoribonuclease that is involved in the initial step of microRNA (miRNA) biogenesis. Component of the microprocessor complex that is required to process primary miRNA transcripts (pri-miRNAs) to release precursor miRNA (pre-miRNA) in the nucleus. Within the microprocessor complex, DROSHA cleaves the 3' and 5' strands of a stem-loop in pri-miRNAs (processing center 11 bp from the dsRNA-ssRNA junction) to release hairpin-shaped pre-miRNAs that are subsequently cut by the cytoplasmic DICER to generate mature miRNAs. Involved also in pre-rRNA processing. Cleaves double-strand RNA and does not cleave single-strand RNA. Involved in the formation of GW bodies. Plays a role in growth homeostasis in response to autophagy in motor neurons. The polypeptide is Ribonuclease 3 (Drosha) (Mus musculus (Mouse)).